Consider the following 167-residue polypeptide: Putative C-type lectin protein FPV008/FPV253 (167 aa).

In terms of domain architecture, C-type lectin spans 49-152; sequence CPDEWIGYNS…SCIFHERTIC (104 aa). Cystine bridges form between cysteine 77/cysteine 152 and cysteine 131/cysteine 144.

This chain is Putative C-type lectin protein FPV008/FPV253, found in Vertebrata (FPV).